The following is a 1830-amino-acid chain: MSLRGPMKRSHLRQVSAASLDSLSTSRSLEASHHDAPSDHPSTPDERAIRLSFPGLERRQCTLWVHDETFSREEILFNQTAFSDTGVSAGDVVEILHARHTADGAHSLKADLGSKSLRDSHAKSSSTLHLDALSKFKTPLQSRCLFVVKPLPQDIKTRHPKLELSVTTSIANIFGFKNRDTVYVSIVDRAQCSASHVDIAFRDQYVVRSDMWRLVMSELADKIVYKGQKIVFMGSIKATVKNIFIRGEKVLSGYFSPQTIPVFRSESAKYVLFIQMSREMWDFDSEGTGDILFSRVINGFLPELFKRWANSDARHLVTIVLFTRVEYDASTIGMSSTLSPESLKNIFNSNHAPTRDFYRVVVNDMASGHWTTILDELKKDFRTFLRDVSTLKVDDAPVAKANGSASAPNARPAVIAGRPSTALRGNILEAIHLASSHLAYDHIDRDMVHTGTSIIVITPGSGVFEVSYESLASTTEALTNRGIAIDLVCLSPMPLHSVPLFKYREPPRRPSTSSFGDIQHGGYSPEMRHSFASLANRTPHLSPKSAIQDSFPGIGLRDSWSTRPQEWNYGIPHWLDISYWNPDTYREARRILKNDPNAPIPFTVTKRSKIFVPRVRMYEIQMMGVMESEQSNISIPYLLEGQSLSRGPSPGLSLSPASLAAPGKPSSRRSSNFRHQLSDSLRPEPFLQNMENPKDVILAKSKKTPNSVLSWMDKYDEKVFQPFPKQRQRRRSPKQKRPSEPNVQVSGAHDRISARSISHLRQHETSGPRPAVRKVEPSFPTPKSPSSAKSASPKKPALKTKSTTKVPRISRTISFALRGLSSTPPRAVASTEVNVEHATGKSSTDTFPDSKSVDSLSVSDSASTRTVIEVSKPPGTPQKPVQSSAITPSRPISIRPAPKLPEEPEQPNRSLAASFSTTATEIPLTEDTRSAAQLRKRGPKFEVTMDPGSRDGQIKSPQSKALAPWVRSINPCNTPREVLRDTTWFGRWQHAYPRPPHVAVVKWKSLKSPAILPLTTEEFPTATELATEYLQTPYRVFPNDDTEGVEAPKTRGVLLREMISLRLSHGFQIVVGKNVVEVSGQYSLQSPNVFDTKGLERDGATVFLSKGKSIHRLICVEGAEIEVTRFTHRSSSVLSPERTNGCTVYTAAMRTILNPVYEIKEIKLDSTTEEYNWNYADNYVAGHRDYLYNPAQQLQFWRVRYVLIPMHLRRNIQSFNEDNEEEIHLLGIDHLTHIWQRHKYVPPEEKRFDTSNKKREQNPLNIMYQTRNPSEVVAAELDRILLTDPGLDSSPAQLLPESELLERSSISLSSLAQIIQGDNGVRMMDRRWHWRLHYNCFIGFELTTWLLQNFRDIDTREEAVEFGDQLMKHGLFQHVEKRHNFRDGNYFYQISSEYRVARPESRNSWFPQIRTEKSTPSTPAGDHSKESPVVGHARSDSVDDTPVQTPTTPSKSKNKATIMLSKSMKYDVDPRKRSNRPEVVDLHYDRLHNPDNCFHLELSWMNTTAKLIEDTVLSWASTAEKFGLKLVQVPIAEACAIDQTQPFRKPYRVQLKVPPPKAPAPTFFNPVSFAQQGAPDQHYFQKALLRKFDFVLDFEARSAFPADVEVSYSWGIPDYRYSQYIHRSGSLLAQITDEGDILLLANRLVSTRSAASRDIPRHERMDRPDQYRARAATYDPGDRMSPRLSPVARPVHDMASPLSPQGHPPLDSANLYRAPEHILSGIVEFCSDAEKLEQFYDESLARPASTKVGPAPATLMDSSIPSLELPASVVSHHISPPPILPSRGPQGSTTVPSVDLRSQVRDDSALPRGSPRAGPRASPLSSGLRPLRLG.

A compositionally biased stretch (basic residues) spans 1-12 (MSLRGPMKRSHL). 4 disordered regions span residues 1 to 47 (MSLR…PDER), 646 to 689 (RGPS…FLQN), 720 to 810 (FQPF…PRIS), and 822 to 960 (STPP…PQSK). Over residues 16-29 (SAASLDSLSTSRSL) the composition is skewed to polar residues. The segment covering 30 to 47 (EASHHDAPSDHPSTPDER) has biased composition (basic and acidic residues). Positions 646–665 (RGPSPGLSLSPASLAAPGKP) are enriched in low complexity. The segment covering 668-679 (RRSSNFRHQLSD) has biased composition (polar residues). The segment covering 726–736 (QRQRRRSPKQK) has biased composition (basic residues). Low complexity-rich tracts occupy residues 784-805 (SPSS…STTK) and 849-863 (DSKS…DSAS). Positions 907-920 (PNRSLAASFSTTAT) are enriched in polar residues. The DEP domain maps to 1317-1392 (GDNGVRMMDR…DGNYFYQISS (76 aa)). Disordered regions lie at residues 1407 to 1456 (PQIR…KNKA) and 1774 to 1830 (ISPP…LRLG). Composition is skewed to low complexity over residues 1440 to 1450 (DTPVQTPTTPS) and 1815 to 1830 (PRAS…LRLG).

Belongs to the IML1 family.

It is found in the vacuole membrane. The polypeptide is Vacuolar membrane-associated protein iml1 (iml1) (Aspergillus terreus (strain NIH 2624 / FGSC A1156)).